A 75-amino-acid chain; its full sequence is Small ribosomal subunit protein bS18 (75 aa).

Residues M1–K11 show a composition bias toward basic residues. The disordered stretch occupies residues M1 to P21.

It belongs to the bacterial ribosomal protein bS18 family. As to quaternary structure, part of the 30S ribosomal subunit. Forms a tight heterodimer with protein bS6.

Functionally, binds as a heterodimer with protein bS6 to the central domain of the 16S rRNA, where it helps stabilize the platform of the 30S subunit. This is Small ribosomal subunit protein bS18 from Jannaschia sp. (strain CCS1).